We begin with the raw amino-acid sequence, 439 residues long: Tubulin beta chain (439 aa).

GTP is bound by residues Gln11, Glu69, Ser138, Gly142, Thr143, Gly144, Asn204, and Asn226. Residue Glu69 coordinates Mg(2+).

It belongs to the tubulin family. As to quaternary structure, dimer of alpha and beta chains. A typical microtubule is a hollow water-filled tube with an outer diameter of 25 nm and an inner diameter of 15 nM. Alpha-beta heterodimers associate head-to-tail to form protofilaments running lengthwise along the microtubule wall with the beta-tubulin subunit facing the microtubule plus end conferring a structural polarity. Microtubules usually have 13 protofilaments but different protofilament numbers can be found in some organisms and specialized cells. Mg(2+) is required as a cofactor.

Its subcellular location is the cytoplasm. The protein resides in the cytoskeleton. Tubulin is the major constituent of microtubules, a cylinder consisting of laterally associated linear protofilaments composed of alpha- and beta-tubulin heterodimers. Microtubules grow by the addition of GTP-tubulin dimers to the microtubule end, where a stabilizing cap forms. Below the cap, tubulin dimers are in GDP-bound state, owing to GTPase activity of alpha-tubulin. This Encephalitozoon cuniculi (strain GB-M1) (Microsporidian parasite) protein is Tubulin beta chain (TUB2).